The sequence spans 394 residues: Bifunctional enzyme Fae/Hps (394 aa).

The interval 1–162 (MEFRIGEALI…YEKDRSFHPF (162 aa)) is formaldehyde-activating enzyme. Catalysis depends on His18, which acts as the Proton donor. Residues Asp20, Leu49, Lys67, Thr69, and Gln84 each contribute to the substrate site. Residues 163-394 (VGRKLTKLWD…TDQFRIMTDF (232 aa)) are 3-hexulose-6-phosphate synthase.

In the N-terminal section; belongs to the formaldehyde-activating enzyme family. This sequence in the C-terminal section; belongs to the HPS/KGPDC family. HPS subfamily.

It catalyses the reaction 5,6,7,8-tetrahydromethanopterin + formaldehyde = 5,10-methylenetetrahydromethanopterin + H2O. It carries out the reaction D-ribulose 5-phosphate + formaldehyde = D-arabino-hex-3-ulose 6-phosphate. It functions in the pathway carbohydrate biosynthesis; D-ribose 5-phosphate biosynthesis. Its function is as follows. Catalyzes the condensation of formaldehyde with tetrahydromethanopterin (H(4)MPT) to 5,10-methylenetetrahydromethanopterin. Functionally, catalyzes the reversible formation of ribulose-5-phosphate and formaldehyde from 3-hexulose-6-phosphate. The protein is Bifunctional enzyme Fae/Hps of Archaeoglobus fulgidus (strain ATCC 49558 / DSM 4304 / JCM 9628 / NBRC 100126 / VC-16).